The following is a 252-amino-acid chain: Putative peptide zinc metalloprotease protein YydH (252 aa).

Transmembrane regions (helical) follow at residues 56 to 76 (FFYL…IHLI) and 85 to 105 (VFYG…NIVL). Zn(2+) is bound at residue histidine 106. The active site involves glutamate 107. Histidine 110 serves as a coordination point for Zn(2+). A run of 3 helical transmembrane segments spans residues 152-172 (IIVH…LELI), 181-201 (ALTM…IPIL), and 231-251 (IQII…LYIV).

Belongs to the peptidase M50B family. The cofactor is Zn(2+).

Its subcellular location is the cell membrane. Required for production of the modified peptide YydF. May process the precursor form of YydF to release the active peptide (Potential). This Bacillus subtilis (strain 168) protein is Putative peptide zinc metalloprotease protein YydH (yydH).